The chain runs to 95 residues: DASH complex subunit DAD3 (95 aa).

The protein belongs to the DASH complex DAD3 family. As to quaternary structure, component of the DASH complex consisting of ASK1, DAD1, DAD2, DAD3, DAD4, DAM1, DUO1, HSK3, SPC19 and SPC34, with a stoichiometry of one copy of each subunit per complex. Multiple DASH complexes oligomerize to form a ring that encircles spindle microtubules and organizes the rod-like NDC80 complexes of the outer kinetochore. DASH complex oligomerization strengthens microtubule attachments. On cytoplasmic microtubules, DASH complexes appear to form patches instead of rings.

The protein resides in the chromosome. The protein localises to the centromere. Its subcellular location is the kinetochore. It is found in the cytoplasm. It localises to the cytoskeleton. The protein resides in the spindle. The protein localises to the nucleus. Functionally, component of the DASH complex that connects microtubules with kinetochores and couples microtubule depolymerisation to chromosome movement; it is involved in retrieving kinetochores to the spindle poles before their re-orientation on the spindle in early mitosis and allows microtubule depolymerization to pull chromosomes apart and resist detachment during anaphase. Kinetochores, consisting of a centromere-associated inner segment and a microtubule-contacting outer segment, play a crucial role in chromosome segregation by mediating the physical connection between centromeric DNA and microtubules. Kinetochores also serve as an input point for the spindle assembly checkpoint, which delays anaphase until all chromosomes have bioriented on the mitotic spindle. This is DASH complex subunit DAD3 from Chaetomium thermophilum (strain DSM 1495 / CBS 144.50 / IMI 039719) (Thermochaetoides thermophila).